The sequence spans 315 residues: MRMCDRGVQMLITTVGAFAAFSLMTIAVGTDYWLYSRGVCRTKSTSDNETSRKNEEVMTHSGLWRTCCLEGAFRGVCKKIDHFPEDADYEQDTAEYLLRAVRASSVFPILSVTLLFFGGLCVAASEFHRSRHNVILSAGIFFVSAGLSNIIGIIVYISANAGDPGQRDSKKSYSYGWSFYFGAFSFIIAEIVGVVAVHIYIEKHQQLRAKSHSELLKKSTFARLPPYRYRFRRRSSSRSTEPRSRDLSPISKGFHTIPSTDISMFTLSRDPSKITMGTLLNSDRDHAFLQFHNSTPKEFKESLHNNPANRRTTPV.

The next 4 membrane-spanning stretches (helical) occupy residues 8–28 (VQMLITTVGAFAAFSLMTIAV), 104–124 (SSVFPILSVTLLFFGGLCVAA), 135–155 (ILSAGIFFVSAGLSNIIGIIV), and 181–201 (FGAFSFIIAEIVGVVAVHIYI). A disordered region spans residues 232-252 (RRRSSSRSTEPRSRDLSPISK). Phosphoserine is present on S248.

Belongs to the PMP-22/EMP/MP20 family. CACNG subfamily. As to quaternary structure, the L-type calcium channel is composed of five subunits: alpha-1, alpha-2/delta, beta and gamma. Acts as an auxiliary subunit for AMPA-selective glutamate receptors (AMPARs). Found in a complex with GRIA1, GRIA2, GRIA3, GRIA4, CNIH2, CNIH3, CACNG2, CACNG4, CACNG5, CACNG7 and CACNG8. Interacts with AP4M1 and GRIA1; associates GRIA1 with the adaptor protein complex 4 (AP-4) to target GRIA1 to the somatodendritic compartment of neurons.

The protein localises to the membrane. In terms of biological role, regulates the trafficking and gating properties of AMPA-selective glutamate receptors (AMPARs). Promotes their targeting to the cell membrane and synapses and modulates their gating properties by slowing their rates of activation, deactivation and desensitization. Does not show subunit-specific AMPA receptor regulation and regulates all AMPAR subunits. Thought to stabilize the calcium channel in an inactivated (closed) state. This Bos taurus (Bovine) protein is Voltage-dependent calcium channel gamma-3 subunit (CACNG3).